Here is a 175-residue protein sequence, read N- to C-terminus: Urease accessory protein UreE (175 aa).

Residues 151–175 are disordered; it reads GGAYGGSPSHAHRHSHVHSHSHETP. The span at 160–169 shows a compositional bias: basic residues; the sequence is HAHRHSHVHS.

It belongs to the UreE family.

Its subcellular location is the cytoplasm. Its function is as follows. Involved in urease metallocenter assembly. Binds nickel. Probably functions as a nickel donor during metallocenter assembly. The chain is Urease accessory protein UreE from Synechococcus sp. (strain WH7805).